Here is a 274-residue protein sequence, read N- to C-terminus: NH(3)-dependent NAD(+) synthetase (274 aa).

ATP is bound at residue 46–53 (GISGGQDS). Position 52 (Asp52) interacts with Mg(2+). Arg140 provides a ligand contact to deamido-NAD(+). Residue Thr160 participates in ATP binding. A Mg(2+)-binding site is contributed by Glu165. Residues Lys173 and Asp180 each coordinate deamido-NAD(+). Lys189 and Thr211 together coordinate ATP. 260 to 261 (HK) contacts deamido-NAD(+).

It belongs to the NAD synthetase family. As to quaternary structure, homodimer.

It catalyses the reaction deamido-NAD(+) + NH4(+) + ATP = AMP + diphosphate + NAD(+) + H(+). It participates in cofactor biosynthesis; NAD(+) biosynthesis; NAD(+) from deamido-NAD(+) (ammonia route): step 1/1. In terms of biological role, catalyzes the ATP-dependent amidation of deamido-NAD to form NAD. Uses ammonia as a nitrogen source. This is NH(3)-dependent NAD(+) synthetase from Streptococcus uberis (strain ATCC BAA-854 / 0140J).